Here is an 85-residue protein sequence, read N- to C-terminus: uncharacterized protein (85 aa).

Residues 1–85 form a disordered region; the sequence is MRWRPSSWSA…DQEQCGQHCR (85 aa). A compositionally biased stretch (basic and acidic residues) spans 47 to 61; the sequence is ASVEGEGGRHADRHG.

This is an uncharacterized protein from Streptomyces lividans.